Consider the following 149-residue polypeptide: Ribonuclease H (149 aa).

The RNase H type-1 domain occupies 1 to 142 (MSTITIHTDG…ADELAREGLA (142 aa)). Asp-9, Glu-47, Asp-70, and Asp-134 together coordinate Mg(2+). The segment at 124–149 (HAGDPGNERADELAREGLAEARGRQP) is disordered. Over residues 129–149 (GNERADELAREGLAEARGRQP) the composition is skewed to basic and acidic residues.

The protein belongs to the RNase H family. As to quaternary structure, monomer. It depends on Mg(2+) as a cofactor.

It is found in the cytoplasm. It catalyses the reaction Endonucleolytic cleavage to 5'-phosphomonoester.. Its function is as follows. Endonuclease that specifically degrades the RNA of RNA-DNA hybrids. This Maricaulis maris (strain MCS10) (Caulobacter maris) protein is Ribonuclease H.